We begin with the raw amino-acid sequence, 166 residues long: Crossover junction endodeoxyribonuclease RuvC (166 aa).

Active-site residues include Asp-7, Glu-68, and Asp-141. The Mg(2+) site is built by Asp-7, Glu-68, and Asp-141.

This sequence belongs to the RuvC family. In terms of assembly, homodimer which binds Holliday junction (HJ) DNA. The HJ becomes 2-fold symmetrical on binding to RuvC with unstacked arms; it has a different conformation from HJ DNA in complex with RuvA. In the full resolvosome a probable DNA-RuvA(4)-RuvB(12)-RuvC(2) complex forms which resolves the HJ. Requires Mg(2+) as cofactor.

The protein localises to the cytoplasm. It carries out the reaction Endonucleolytic cleavage at a junction such as a reciprocal single-stranded crossover between two homologous DNA duplexes (Holliday junction).. Its function is as follows. The RuvA-RuvB-RuvC complex processes Holliday junction (HJ) DNA during genetic recombination and DNA repair. Endonuclease that resolves HJ intermediates. Cleaves cruciform DNA by making single-stranded nicks across the HJ at symmetrical positions within the homologous arms, yielding a 5'-phosphate and a 3'-hydroxyl group; requires a central core of homology in the junction. The consensus cleavage sequence is 5'-(A/T)TT(C/G)-3'. Cleavage occurs on the 3'-side of the TT dinucleotide at the point of strand exchange. HJ branch migration catalyzed by RuvA-RuvB allows RuvC to scan DNA until it finds its consensus sequence, where it cleaves and resolves the cruciform DNA. This chain is Crossover junction endodeoxyribonuclease RuvC, found in Koribacter versatilis (strain Ellin345).